Reading from the N-terminus, the 295-residue chain is Craniofacial development protein 1 (295 aa).

Acidic residues-rich tracts occupy residues 1 to 18 and 25 to 43; these read MEEFDSEDFSTSDEDEDY and YSEDDVNELVKEDEVDGEE. Disordered stretches follow at residues 1-155 and 188-219; these read MEEF…KPKE and FLKQTEKEKPQALVTSAATPPPAGSGIKRTSG. Over residues 49 to 65 the composition is skewed to basic residues; that stretch reads KGKRRKAQSIPARKRKQ. A compositionally biased stretch (acidic residues) spans 70 to 93; sequence LDEEEDGEEDSGGSSREEDEEEQE. A phosphoserine mark is found at serine 80, serine 83, serine 84, and serine 112. The segment covering 120–130 has biased composition (low complexity); it reads KSKAASSSQVK. 2 stretches are compositionally biased toward basic and acidic residues: residues 145 to 155 and 188 to 197; these read VKADELEKPKE and FLKQTEKEKP. Lysine 146 is covalently cross-linked (Glycyl lysine isopeptide (Lys-Gly) (interchain with G-Cter in SUMO2)). A hydrophilic region spans residues 174–213; the sequence is VTKEVDATSKEAKSFLKQTEKEKPQALVTSAATPPPAGSG. Residue serine 212 is modified to Phosphoserine. The BCNT-C domain maps to 214 to 295; it reads IKRTSGMSSL…RDLRLSKMKP (82 aa). Residue lysine 215 is modified to N6-methyllysine. Serine 246 is subject to Phosphoserine.

The protein resides in the chromosome. Its subcellular location is the centromere. The protein localises to the kinetochore. Functionally, may play a role during embryogenesis. This chain is Craniofacial development protein 1 (Cfdp1), found in Rattus norvegicus (Rat).